Consider the following 40-residue polypeptide: Protamine-2 (40 aa).

The segment at 1 to 40 is disordered; it reads MPPRRKRVSSAPRRRRRTYRRTTAHKHQERPVHRRRRRRH.

As to expression, testis.

It localises to the nucleus. Its subcellular location is the chromosome. In terms of biological role, protamines substitute for histones in the chromatin of sperm during the haploid phase of spermatogenesis. They compact sperm DNA into a highly condensed, stable and inactive complex. The sequence is that of Protamine-2 (PBP2) from Bufo japonicus (Japanese common toad).